We begin with the raw amino-acid sequence, 342 residues long: Nicotinate-nucleotide--dimethylbenzimidazole phosphoribosyltransferase (342 aa).

Glu-311 (proton acceptor) is an active-site residue.

It belongs to the CobT family.

It catalyses the reaction 5,6-dimethylbenzimidazole + nicotinate beta-D-ribonucleotide = alpha-ribazole 5'-phosphate + nicotinate + H(+). It functions in the pathway nucleoside biosynthesis; alpha-ribazole biosynthesis; alpha-ribazole from 5,6-dimethylbenzimidazole: step 1/2. Catalyzes the synthesis of alpha-ribazole-5'-phosphate from nicotinate mononucleotide (NAMN) and 5,6-dimethylbenzimidazole (DMB). The polypeptide is Nicotinate-nucleotide--dimethylbenzimidazole phosphoribosyltransferase (Shewanella piezotolerans (strain WP3 / JCM 13877)).